The primary structure comprises 101 residues: Small ribosomal subunit protein uS14 (101 aa).

Belongs to the universal ribosomal protein uS14 family. As to quaternary structure, part of the 30S ribosomal subunit. Contacts proteins S3 and S10.

In terms of biological role, binds 16S rRNA, required for the assembly of 30S particles and may also be responsible for determining the conformation of the 16S rRNA at the A site. This Polaromonas sp. (strain JS666 / ATCC BAA-500) protein is Small ribosomal subunit protein uS14.